The sequence spans 149 residues: Small ribosomal subunit protein uS15 (149 aa).

Positions 1 to 14 (MGRMHTHRHGKSHS) are enriched in basic residues. Residues 1–20 (MGRMHTHRHGKSHSIRPATL) form a disordered region.

This sequence belongs to the universal ribosomal protein uS15 family. As to quaternary structure, part of the 30S ribosomal subunit.

The sequence is that of Small ribosomal subunit protein uS15 from Nitrosopumilus maritimus (strain SCM1).